A 413-amino-acid chain; its full sequence is Serpin A12 (413 aa).

Positions 1–20 (MTRMLDLGLFLAGLLTVKGL) are cleaved as a signal peptide. Asn92 and Asn267 each carry an N-linked (GlcNAc...) asparagine glycan. The interval 364–382 (GMEGAAGSGAQTLPMETPR) is reactive center loop.

Belongs to the serpin family. In terms of assembly, forms a stable complex with KLK7. Glycosylation slightly decreases affinity for heparin, but otherwise has no significant effect on KLK7 inhibitory activity or thermal stability of the protein. As to expression, expressed in visceral adipose tissues.

It is found in the secreted. With respect to regulation, inhibition of KLK7 is enhanced by heparin. Functionally, adipokine that modulates insulin action by specifically inhibiting its target protease KLK7 in white adipose tissues. The polypeptide is Serpin A12 (Serpina12) (Mus musculus (Mouse)).